The following is a 196-amino-acid chain: Protein GrpE (196 aa).

The disordered stretch occupies residues 1 to 41; that stretch reads MSSKEQKTPEGQAPEEIITEQHDDVEAVEPEVSAEQVDPRD.

This sequence belongs to the GrpE family. Homodimer.

It is found in the cytoplasm. Participates actively in the response to hyperosmotic and heat shock by preventing the aggregation of stress-denatured proteins, in association with DnaK and GrpE. It is the nucleotide exchange factor for DnaK and may function as a thermosensor. Unfolded proteins bind initially to DnaJ; upon interaction with the DnaJ-bound protein, DnaK hydrolyzes its bound ATP, resulting in the formation of a stable complex. GrpE releases ADP from DnaK; ATP binding to DnaK triggers the release of the substrate protein, thus completing the reaction cycle. Several rounds of ATP-dependent interactions between DnaJ, DnaK and GrpE are required for fully efficient folding. This chain is Protein GrpE, found in Klebsiella pneumoniae subsp. pneumoniae (strain ATCC 700721 / MGH 78578).